A 403-amino-acid chain; its full sequence is Phosphopentomutase (403 aa).

Mn(2+) is bound by residues Asp-13, Asp-298, His-303, Asp-339, His-340, and His-351.

It belongs to the phosphopentomutase family. Mn(2+) serves as cofactor.

It localises to the cytoplasm. It catalyses the reaction 2-deoxy-alpha-D-ribose 1-phosphate = 2-deoxy-D-ribose 5-phosphate. The enzyme catalyses alpha-D-ribose 1-phosphate = D-ribose 5-phosphate. Its pathway is carbohydrate degradation; 2-deoxy-D-ribose 1-phosphate degradation; D-glyceraldehyde 3-phosphate and acetaldehyde from 2-deoxy-alpha-D-ribose 1-phosphate: step 1/2. In terms of biological role, isomerase that catalyzes the conversion of deoxy-ribose 1-phosphate (dRib-1-P) and ribose 1-phosphate (Rib-1-P) to deoxy-ribose 5-phosphate (dRib-5-P) and ribose 5-phosphate (Rib-5-P), respectively. The chain is Phosphopentomutase from Streptococcus thermophilus (strain ATCC BAA-491 / LMD-9).